The sequence spans 156 residues: Small ribosomal subunit protein uS7 (156 aa).

It belongs to the universal ribosomal protein uS7 family. In terms of assembly, part of the 30S ribosomal subunit. Contacts proteins S9 and S11.

Its function is as follows. One of the primary rRNA binding proteins, it binds directly to 16S rRNA where it nucleates assembly of the head domain of the 30S subunit. Is located at the subunit interface close to the decoding center, probably blocks exit of the E-site tRNA. This is Small ribosomal subunit protein uS7 from Bacillus cereus (strain ZK / E33L).